Consider the following 821-residue polypeptide: Leucine--tRNA ligase (821 aa).

Residues Pro-44–His-54 carry the 'HIGH' region motif. The short motif at Lys-589–Ser-593 is the 'KMSKS' region element. Residue Lys-592 coordinates ATP.

This sequence belongs to the class-I aminoacyl-tRNA synthetase family.

The protein localises to the cytoplasm. It catalyses the reaction tRNA(Leu) + L-leucine + ATP = L-leucyl-tRNA(Leu) + AMP + diphosphate. This is Leucine--tRNA ligase from Campylobacter curvus (strain 525.92).